The following is a 180-amino-acid chain: Sec-independent protein translocase protein TatB (180 aa).

The helical transmembrane segment at 1-21 threads the bilayer; the sequence is MFDIGWSELLVIGVVALIAIG. A disordered region spans residues 77–180; the sequence is TRGDLMTRLT…DQTARGAKAS (104 aa). Positions 105 to 129 are enriched in low complexity; the sequence is ADKPSVSSDAASASGSAAPEAGAAE.

It belongs to the TatB family. In terms of assembly, the Tat system comprises two distinct complexes: a TatABC complex, containing multiple copies of TatA, TatB and TatC subunits, and a separate TatA complex, containing only TatA subunits. Substrates initially bind to the TatABC complex, which probably triggers association of the separate TatA complex to form the active translocon.

Its subcellular location is the cell inner membrane. Part of the twin-arginine translocation (Tat) system that transports large folded proteins containing a characteristic twin-arginine motif in their signal peptide across membranes. Together with TatC, TatB is part of a receptor directly interacting with Tat signal peptides. TatB may form an oligomeric binding site that transiently accommodates folded Tat precursor proteins before their translocation. In Nitrobacter winogradskyi (strain ATCC 25391 / DSM 10237 / CIP 104748 / NCIMB 11846 / Nb-255), this protein is Sec-independent protein translocase protein TatB.